The sequence spans 489 residues: WD repeat-containing protein JIP5 (489 aa).

Residues 4–45 (PLSSDALDLCFHPAAETNLLAVGLISGKIQLINYDDYLSSPS) form a WD 1 repeat. A disordered region spans residues 46–66 (SSRTPLAPPSKKSKPSTISSA). One copy of the WD 2 repeat lies at 124 to 163 (EVHDAAPSRVLPVDESLVVTGDDDGVVRLWDVRKGGGKGI). The disordered stretch occupies residues 192-246 (SIKEAKKSKTQLKKQRRRARQAERLKEHDKEKREQNASDTEASEPDSEDDAAIKV). Residues 199–210 (SKTQLKKQRRRA) show a composition bias toward basic residues. Over residues 211-227 (RQAERLKEHDKEKREQN) the composition is skewed to basic and acidic residues. Positions 232–241 (EASEPDSEDD) are enriched in acidic residues. WD repeat units lie at residues 279 to 318 (DQEDELLSITSIRSSTKLVVGTQLGILSLWTPSRGLLDHV) and 323 to 363 (GHPA…GVIA). Residues 417–489 (IVGLAEDDSD…AGKGGFFSDL (73 aa)) form a disordered region. 2 stretches are compositionally biased toward acidic residues: residues 421–440 (AEDDSDDDDDDDDDDDDDDD) and 449–472 (DGAEQTDGDAESGQDDEQDPDSED).

The protein belongs to the WD repeat WDR55 family.

It localises to the nucleus. The protein localises to the nucleolus. This Mycosarcoma maydis (Corn smut fungus) protein is WD repeat-containing protein JIP5 (JIP5).